We begin with the raw amino-acid sequence, 443 residues long: D-serine dehydratase (443 aa).

Residue Lys-118 is modified to N6-(pyridoxal phosphate)lysine.

The protein belongs to the serine/threonine dehydratase family. DsdA subfamily. Monomer. Pyridoxal 5'-phosphate serves as cofactor.

It catalyses the reaction D-serine = pyruvate + NH4(+). The chain is D-serine dehydratase from Yersinia enterocolitica serotype O:8 / biotype 1B (strain NCTC 13174 / 8081).